The following is a 138-amino-acid chain: Acidic phospholipase A2 5 (138 aa).

A signal peptide spans 1 to 16 (MRTLWIVAVWLIGVEG). Cystine bridges form between cysteine 42–cysteine 131, cysteine 44–cysteine 60, cysteine 59–cysteine 111, cysteine 65–cysteine 138, cysteine 66–cysteine 104, cysteine 73–cysteine 97, and cysteine 91–cysteine 102. Ca(2+) contacts are provided by tyrosine 43, glycine 45, and glycine 47. Histidine 63 is an active-site residue. Aspartate 64 serves as a coordination point for Ca(2+). Aspartate 105 is an active-site residue.

The protein belongs to the phospholipase A2 family. Group II subfamily. D49 sub-subfamily. It depends on Ca(2+) as a cofactor. Expressed by the venom gland.

Its subcellular location is the secreted. It carries out the reaction a 1,2-diacyl-sn-glycero-3-phosphocholine + H2O = a 1-acyl-sn-glycero-3-phosphocholine + a fatty acid + H(+). Its function is as follows. PLA2 catalyzes the calcium-dependent hydrolysis of the 2-acyl groups in 3-sn-phosphoglycerides. This is Acidic phospholipase A2 5 from Echis ocellatus (Ocellated saw-scaled viper).